Here is a 113-residue protein sequence, read N- to C-terminus: Urease subunit beta (113 aa).

It belongs to the urease beta subunit family. In terms of assembly, heterotrimer of UreA (gamma), UreB (beta) and UreC (alpha) subunits. Three heterotrimers associate to form the active enzyme.

It is found in the cytoplasm. It catalyses the reaction urea + 2 H2O + H(+) = hydrogencarbonate + 2 NH4(+). Its pathway is nitrogen metabolism; urea degradation; CO(2) and NH(3) from urea (urease route): step 1/1. The protein is Urease subunit beta of Nitrosospira multiformis (strain ATCC 25196 / NCIMB 11849 / C 71).